The following is a 176-amino-acid chain: Isopentenyl-diphosphate Delta-isomerase (176 aa).

His24 and His30 together coordinate Mn(2+). Residues 28 to 160 (LLHRAFSIFV…PSAFTVWFHC (133 aa)) enclose the Nudix hydrolase domain. Residue Cys65 is part of the active site. His67 is a binding site for Mn(2+). Residue Glu85 coordinates Mg(2+). Glu110 and Glu112 together coordinate Mn(2+). The active site involves Glu112.

It belongs to the IPP isomerase type 1 family. Requires Mg(2+) as cofactor. Mn(2+) is required as a cofactor.

It is found in the cytoplasm. The catalysed reaction is isopentenyl diphosphate = dimethylallyl diphosphate. Its pathway is isoprenoid biosynthesis; dimethylallyl diphosphate biosynthesis; dimethylallyl diphosphate from isopentenyl diphosphate: step 1/1. Functionally, catalyzes the 1,3-allylic rearrangement of the homoallylic substrate isopentenyl (IPP) to its highly electrophilic allylic isomer, dimethylallyl diphosphate (DMAPP). The sequence is that of Isopentenyl-diphosphate Delta-isomerase from Burkholderia multivorans (strain ATCC 17616 / 249).